A 241-amino-acid chain; its full sequence is Major prion protein (241 aa).

A signal peptide spans 1 to 15; that stretch reads MLVLFVATWSDLGLC. The tract at residues 16 to 31 is interaction with ADGRG6; that stretch reads KKRPKPGGWNTGGSRY. The interval 16-223 is interaction with GRB2, ERI3 and SYN1; that stretch reads KKRPKPGGWN…ESQAYYQRGS (208 aa). Residues 18-101 form a disordered region; the sequence is RPKPGGWNTG…WHKPNKPKTS (84 aa). A run of 5 repeats spans residues 44-52, 53-60, 61-68, 69-76, and 77-84. The segment at 44 to 84 is 5 X 8 AA tandem repeats of P-H-G-G-G-W-G-Q; sequence PQGGGGWGQPHGGGWGQPHGGGWGQPHGGGWGQPHGGGWGQ. The segment covering 45–88 has biased composition (gly residues); that stretch reads QGGGGWGQPHGGGWGQPHGGGWGQPHGGGWGQPHGGGWGQGGGT. 12 residues coordinate Cu(2+): His-54, Gly-55, Gly-56, His-62, Gly-63, Gly-64, His-70, Gly-71, Gly-72, His-78, Gly-79, and Gly-80. Residues 91–101 show a composition bias toward basic residues; the sequence is QWHKPNKPKTS. Cys-172 and Cys-207 are joined by a disulfide. 2 N-linked (GlcNAc...) asparagine glycosylation sites follow: Asn-174 and Asn-190. Ser-223 is lipidated: GPI-anchor amidated serine. Positions 224–241 are cleaved as a propeptide — removed in mature form; that stretch reads SMVLFSSPPVILLISFLI.

It belongs to the prion family. Monomer and homodimer. Has a tendency to aggregate into amyloid fibrils containing a cross-beta spine, formed by a steric zipper of superposed beta-strands. Soluble oligomers may represent an intermediate stage on the path to fibril formation. Copper binding may promote oligomerization. Interacts with GRB2, APP, ERI3/PRNPIP and SYN1. Mislocalized cytosolically exposed PrP interacts with MGRN1; this interaction alters MGRN1 subcellular location and causes lysosomal enlargement. Interacts with APP. Interacts with KIAA1191. Interacts with ADGRG6.

The protein resides in the cell membrane. Its subcellular location is the golgi apparatus. Its function is as follows. Its primary physiological function is unclear. May play a role in neuronal development and synaptic plasticity. May be required for neuronal myelin sheath maintenance. May promote myelin homeostasis through acting as an agonist for ADGRG6 receptor. May play a role in iron uptake and iron homeostasis. Soluble oligomers are toxic to cultured neuroblastoma cells and induce apoptosis (in vitro). Association with GPC1 (via its heparan sulfate chains) targets PRNP to lipid rafts. Also provides Cu(2+) or Zn(2+) for the ascorbate-mediated GPC1 deaminase degradation of its heparan sulfate side chains. The chain is Major prion protein (PRNP) from Mandrillus sphinx (Mandrill).